The chain runs to 423 residues: Serine--tRNA ligase (423 aa).

Position 231-233 (231-233 (TAE)) interacts with L-serine. 262 to 264 (RSE) contributes to the ATP binding site. Glu-285 serves as a coordination point for L-serine. 349–352 (EISS) is an ATP binding site. L-serine is bound at residue Ser-384.

Belongs to the class-II aminoacyl-tRNA synthetase family. Type-1 seryl-tRNA synthetase subfamily. As to quaternary structure, homodimer. The tRNA molecule binds across the dimer.

It is found in the cytoplasm. It carries out the reaction tRNA(Ser) + L-serine + ATP = L-seryl-tRNA(Ser) + AMP + diphosphate + H(+). The catalysed reaction is tRNA(Sec) + L-serine + ATP = L-seryl-tRNA(Sec) + AMP + diphosphate + H(+). It participates in aminoacyl-tRNA biosynthesis; selenocysteinyl-tRNA(Sec) biosynthesis; L-seryl-tRNA(Sec) from L-serine and tRNA(Sec): step 1/1. In terms of biological role, catalyzes the attachment of serine to tRNA(Ser). Is also able to aminoacylate tRNA(Sec) with serine, to form the misacylated tRNA L-seryl-tRNA(Sec), which will be further converted into selenocysteinyl-tRNA(Sec). The protein is Serine--tRNA ligase of Acinetobacter baylyi (strain ATCC 33305 / BD413 / ADP1).